A 59-amino-acid chain; its full sequence is Conorfamide-Vc1 (59 aa).

An N-terminal signal peptide occupies residues 1 to 19 (MSGRGFLLLALLLLVTVEA). A propeptide spanning residues 20-25 (TKVEKK) is cleaved from the precursor. The positively charged region crucial for activity against MRGPRX1 receptors stretch occupies residues 32-39 (AWSGPRNR). Phenylalanine 43 bears the Phenylalanine amide mark. Residues 45–59 (RRDMQSPLLSERLRL) constitute a propeptide that is removed on maturation.

Belongs to the FARP (FMRFamide related peptide) family. Expressed by the venom duct.

It is found in the secreted. Functionally, this peptide activates human and mouse sensory neuron-specific G-protein coupled receptors MRGPRX1. The activity on human receptors has been measured (EC(50)=1.8 uM). Compared with the agonist chloroquine (anti-malaria drug), it is 200-fold more potent. The peptide also causes an increase in cytosolic calcium in a specific subset of DRG neurons, and, in contrast to other Conus venom peptides, the peptide also affects a large fraction of the non-neuronal cells. In vivo, when intracranially injected into mice, it principally renders mice unable to move, and at very low doses, it causes hyperactivity. It also induces itch sensation, since intradermal cheek injection into humanized transgenic mouse (mouse MRGPRX1 replaced by human MRGPRX1) induces scratching. In vivo, when tested at high doses (10 uM) on zebrafish larvae, it induces a range of behavioral effects ranging from an early hypoactivity during the first hour of treatment to an increase in movement during the following hours when the larvae are submitted to strobe light phases. In Conus victoriae (Queen Victoria cone), this protein is Conorfamide-Vc1.